The primary structure comprises 222 residues: Uracil-DNA glycosylase (222 aa).

The active-site Proton acceptor is D61.

Belongs to the uracil-DNA glycosylase (UDG) superfamily. UNG family.

The protein localises to the cytoplasm. The catalysed reaction is Hydrolyzes single-stranded DNA or mismatched double-stranded DNA and polynucleotides, releasing free uracil.. Functionally, excises uracil residues from the DNA which can arise as a result of misincorporation of dUMP residues by DNA polymerase or due to deamination of cytosine. This Actinobacillus succinogenes (strain ATCC 55618 / DSM 22257 / CCUG 43843 / 130Z) protein is Uracil-DNA glycosylase.